Consider the following 347-residue polypeptide: Quinolinate synthase (347 aa).

Positions 47 and 68 each coordinate iminosuccinate. Cysteine 113 provides a ligand contact to [4Fe-4S] cluster. Iminosuccinate is bound by residues 139 to 141 (YAN) and serine 156. Cysteine 200 serves as a coordination point for [4Fe-4S] cluster. Iminosuccinate contacts are provided by residues 226 to 228 (HPE) and threonine 243. Residue cysteine 297 coordinates [4Fe-4S] cluster.

It belongs to the quinolinate synthase family. Type 1 subfamily. [4Fe-4S] cluster serves as cofactor.

It is found in the cytoplasm. The catalysed reaction is iminosuccinate + dihydroxyacetone phosphate = quinolinate + phosphate + 2 H2O + H(+). Its pathway is cofactor biosynthesis; NAD(+) biosynthesis; quinolinate from iminoaspartate: step 1/1. In terms of biological role, catalyzes the condensation of iminoaspartate with dihydroxyacetone phosphate to form quinolinate. The protein is Quinolinate synthase of Shigella flexneri.